A 132-amino-acid polypeptide reads, in one-letter code: Small ribosomal subunit protein uS8 (132 aa).

This sequence belongs to the universal ribosomal protein uS8 family. As to quaternary structure, part of the 30S ribosomal subunit. Contacts proteins S5 and S12.

Functionally, one of the primary rRNA binding proteins, it binds directly to 16S rRNA central domain where it helps coordinate assembly of the platform of the 30S subunit. This Lactobacillus delbrueckii subsp. bulgaricus (strain ATCC BAA-365 / Lb-18) protein is Small ribosomal subunit protein uS8.